A 542-amino-acid chain; its full sequence is Prolyl 3-hydroxylase OGFOD1 (542 aa).

The 106-residue stretch at 134 to 239 folds into the Fe2OG dioxygenase domain; it reads DLESTIDMSC…RLSISGWFHG (106 aa). The Fe cation site is built by histidine 155 and aspartate 157. Residue tyrosine 169 coordinates 2-oxoglutarate. Position 218 (histidine 218) interacts with Fe cation. Arginine 230 contacts 2-oxoglutarate. Residues 373 to 435 are disordered; it reads EDEMNDKKEA…TKKESSVPTC (63 aa). The segment covering 400-416 has biased composition (polar residues); sequence ENNQTAISNNSQQSNEQ.

The protein belongs to the TPA1 family. Monomer. Fe(2+) is required as a cofactor. It depends on L-ascorbate as a cofactor.

Its subcellular location is the cytoplasm. It localises to the nucleus. The enzyme catalyses [ribosomal protein uS12]-L-proline + 2-oxoglutarate + O2 = [ribosomal protein uS12]-(3S)-3-hydroxy-L-proline + succinate + CO2. Its function is as follows. Prolyl 3-hydroxylase that catalyzes 3-hydroxylation of 'Pro-62' of small ribosomal subunit uS12 (RPS23), thereby regulating protein translation termination efficiency. Involved in stress granule formation. In Pongo abelii (Sumatran orangutan), this protein is Prolyl 3-hydroxylase OGFOD1 (OGFOD1).